The following is a 151-amino-acid chain: Large ribosomal subunit protein bL9 (151 aa).

Belongs to the bacterial ribosomal protein bL9 family.

Its function is as follows. Binds to the 23S rRNA. The polypeptide is Large ribosomal subunit protein bL9 (Prochlorococcus marinus (strain AS9601)).